Reading from the N-terminus, the 337-residue chain is tRNA N(3)-cytidine methyltransferase METTL2 (337 aa).

6 residues coordinate S-adenosyl-L-methionine: tryptophan 66, tyrosine 70, glycine 140, aspartate 165, aspartate 191, and isoleucine 212.

Belongs to the methyltransferase superfamily. METL family. Monomer.

It is found in the cytoplasm. It carries out the reaction cytidine(32) in tRNA(Thr) + S-adenosyl-L-methionine = N(3)-methylcytidine(32) in tRNA(Thr) + S-adenosyl-L-homocysteine + H(+). The catalysed reaction is cytidine(32) in tRNA(Arg)(CCU) + S-adenosyl-L-methionine = N(3)-methylcytidine(32) in tRNA(Arg)(CCU) + S-adenosyl-L-homocysteine + H(+). Functionally, S-adenosyl-L-methionine-dependent methyltransferase that mediates N(3)-methylcytidine modification of residue 32 of the tRNA anticodon loop of tRNA(Thr)(UGU) and tRNA(Arg)(CCU). N(3)-methylcytidine methylation by mettl2 requires the N6-threonylcarbamoylation of tRNA (t6A37) by the EKC/KEOPS complex as prerequisite. The polypeptide is tRNA N(3)-cytidine methyltransferase METTL2 (mettl2) (Xenopus tropicalis (Western clawed frog)).